The following is a 282-amino-acid chain: Protein NEOXANTHIN-DEFICIENT 1 (282 aa).

Functionally, required for neoxanthin biosynthesis. Probably not involved directly in the enzymatic conversion of violaxanthin to neoxanthin. Is necessary but not sufficient for neoxanthin synthesis. This chain is Protein NEOXANTHIN-DEFICIENT 1, found in Arabidopsis thaliana (Mouse-ear cress).